The sequence spans 256 residues: F-actin-capping protein subunit beta (256 aa).

An N-acetylmethionine modification is found at Met-1.

This sequence belongs to the F-actin-capping protein beta subunit family. In terms of assembly, component of the F-actin capping complex, composed of a heterodimer of an alpha and a beta subunit.

Its subcellular location is the cytoplasm. The protein resides in the cytoskeleton. In terms of biological role, F-actin-capping proteins bind in a Ca(2+)-independent manner to the fast growing ends of actin filaments (barbed end) thereby blocking the exchange of subunits at these ends. Unlike other capping proteins (such as gelsolin and severin), these proteins do not sever actin filaments. This chain is F-actin-capping protein subunit beta, found in Arabidopsis thaliana (Mouse-ear cress).